Here is a 148-residue protein sequence, read N- to C-terminus: Large ribosomal subunit protein uL15 (148 aa).

Over residues 1–10 (MQLHNLEYKK) the composition is skewed to basic and acidic residues. The tract at residues 1-42 (MQLHNLEYKKGSRNHKEKRVGRGHGSGLGKTSGRGQDGQKAR) is disordered. The span at 11–22 (GSRNHKEKRVGR) shows a compositional bias: basic residues. Over residues 23-36 (GHGSGLGKTSGRGQ) the composition is skewed to gly residues.

This sequence belongs to the universal ribosomal protein uL15 family. As to quaternary structure, part of the 50S ribosomal subunit.

In terms of biological role, binds to the 23S rRNA. In Ureaplasma urealyticum serovar 10 (strain ATCC 33699 / Western), this protein is Large ribosomal subunit protein uL15.